We begin with the raw amino-acid sequence, 262 residues long: Ribose-5-phosphate isomerase A (262 aa).

Substrate-binding positions include 33–36 (TGST), 89–92 (DGAD), and 102–105 (KGGG). Glu111 acts as the Proton acceptor in catalysis. Lys129 contributes to the substrate binding site.

The protein belongs to the ribose 5-phosphate isomerase family. Homodimer.

It carries out the reaction aldehydo-D-ribose 5-phosphate = D-ribulose 5-phosphate. The protein operates within carbohydrate degradation; pentose phosphate pathway; D-ribose 5-phosphate from D-ribulose 5-phosphate (non-oxidative stage): step 1/1. In terms of biological role, catalyzes the reversible conversion of ribose-5-phosphate to ribulose 5-phosphate. The polypeptide is Ribose-5-phosphate isomerase A (Cereibacter sphaeroides (strain ATCC 17023 / DSM 158 / JCM 6121 / CCUG 31486 / LMG 2827 / NBRC 12203 / NCIMB 8253 / ATH 2.4.1.) (Rhodobacter sphaeroides)).